A 510-amino-acid chain; its full sequence is Lysine--tRNA ligase (510 aa).

Mg(2+) contacts are provided by Glu420 and Glu427.

The protein belongs to the class-II aminoacyl-tRNA synthetase family. As to quaternary structure, homodimer. It depends on Mg(2+) as a cofactor.

It localises to the cytoplasm. The catalysed reaction is tRNA(Lys) + L-lysine + ATP = L-lysyl-tRNA(Lys) + AMP + diphosphate. The chain is Lysine--tRNA ligase from Ralstonia nicotianae (strain ATCC BAA-1114 / GMI1000) (Ralstonia solanacearum).